The following is a 695-amino-acid chain: Lasso peptide isopeptidase AtxE2 (695 aa).

The signal sequence occupies residues 1–30 (MRSSKIRCPGAIRVGTLVTAFGCLPHVAFA). 2 cysteine pairs are disulfide-bonded: Cys-296-Cys-301 and Cys-354-Cys-363. Ser-527 serves as the catalytic Nucleophile. Residues Cys-551 and Cys-552 are joined by a disulfide bond. Active-site charge relay system residues include Glu-610 and His-638.

Its subcellular location is the cytoplasm. In terms of biological role, lasso peptide isopeptidase that specifically hydrolyzes Astexin-2 and Astexin-3, converting them to linear peptides. Has only a few specific contacts with substrates, because it recognizes Astexin knotted structure (principally the loop structure). Its binding to lasso peptides opens them to expose the isopeptide bonds for hydrolysis. The chain is Lasso peptide isopeptidase AtxE2 from Asticcacaulis excentricus (strain ATCC 15261 / DSM 4724 / KCTC 12464 / NCIMB 9791 / VKM B-1370 / CB 48).